A 122-amino-acid polypeptide reads, in one-letter code: Ig heavy chain V region M603 (122 aa).

The Ig-like domain maps to 1–121 (EVKLVESGGG…WGAGTTVTVS (121 aa)).

The chain is Ig heavy chain V region M603 from Mus musculus (Mouse).